A 118-amino-acid polypeptide reads, in one-letter code: Large ribosomal subunit protein bL20 (118 aa).

It belongs to the bacterial ribosomal protein bL20 family.

Its function is as follows. Binds directly to 23S ribosomal RNA and is necessary for the in vitro assembly process of the 50S ribosomal subunit. It is not involved in the protein synthesizing functions of that subunit. This is Large ribosomal subunit protein bL20 from Caulobacter vibrioides (strain ATCC 19089 / CIP 103742 / CB 15) (Caulobacter crescentus).